The sequence spans 159 residues: MNITVISVGKLKEKYLKQAIDEYSKRLSRYCKLEIIELPDEKTPDNASEKEELQIKEKEGKLILSKIKDNMHVIAMDLKGNEITSEKFSKYIENCGVMGNSNITFVIGGSLGLSQEVIKRADYKLCFSKMTFPHQLFRVMLLEQVYRAFRIMKNEPYHK.

S-adenosyl-L-methionine contacts are provided by residues Gly108 and 127–132 (FSKMTF).

Belongs to the RNA methyltransferase RlmH family. As to quaternary structure, homodimer.

The protein localises to the cytoplasm. The enzyme catalyses pseudouridine(1915) in 23S rRNA + S-adenosyl-L-methionine = N(3)-methylpseudouridine(1915) in 23S rRNA + S-adenosyl-L-homocysteine + H(+). Specifically methylates the pseudouridine at position 1915 (m3Psi1915) in 23S rRNA. This is Ribosomal RNA large subunit methyltransferase H from Clostridium perfringens (strain ATCC 13124 / DSM 756 / JCM 1290 / NCIMB 6125 / NCTC 8237 / Type A).